The primary structure comprises 146 residues: Probable glycine cleavage system H protein 3 (146 aa).

A Lipoyl-binding domain is found at 29-111; it reads VVSVGMTDLG…PYGSWIIKVS (83 aa). An N6-lipoyllysine modification is found at Lys71.

This sequence belongs to the GcvH family. As to quaternary structure, the glycine cleavage system is composed of four proteins: P, T, L and H. (R)-lipoate serves as cofactor.

The glycine cleavage system catalyzes the degradation of glycine. The H protein shuttles the methylamine group of glycine from the P protein to the T protein. In Sulfolobus acidocaldarius (strain ATCC 33909 / DSM 639 / JCM 8929 / NBRC 15157 / NCIMB 11770), this protein is Probable glycine cleavage system H protein 3.